The chain runs to 330 residues: Phosphate acyltransferase (330 aa).

It belongs to the PlsX family. In terms of assembly, homodimer. Probably interacts with PlsY.

It is found in the cytoplasm. It catalyses the reaction a fatty acyl-[ACP] + phosphate = an acyl phosphate + holo-[ACP]. It functions in the pathway lipid metabolism; phospholipid metabolism. Catalyzes the reversible formation of acyl-phosphate (acyl-PO(4)) from acyl-[acyl-carrier-protein] (acyl-ACP). This enzyme utilizes acyl-ACP as fatty acyl donor, but not acyl-CoA. In Lysinibacillus sphaericus (strain C3-41), this protein is Phosphate acyltransferase.